Here is a 238-residue protein sequence, read N- to C-terminus: 2-C-methyl-D-erythritol 4-phosphate cytidylyltransferase (238 aa).

It belongs to the IspD/TarI cytidylyltransferase family. IspD subfamily.

The enzyme catalyses 2-C-methyl-D-erythritol 4-phosphate + CTP + H(+) = 4-CDP-2-C-methyl-D-erythritol + diphosphate. It participates in isoprenoid biosynthesis; isopentenyl diphosphate biosynthesis via DXP pathway; isopentenyl diphosphate from 1-deoxy-D-xylulose 5-phosphate: step 2/6. In terms of biological role, catalyzes the formation of 4-diphosphocytidyl-2-C-methyl-D-erythritol from CTP and 2-C-methyl-D-erythritol 4-phosphate (MEP). In Alteromonas mediterranea (strain DSM 17117 / CIP 110805 / LMG 28347 / Deep ecotype), this protein is 2-C-methyl-D-erythritol 4-phosphate cytidylyltransferase.